A 607-amino-acid polypeptide reads, in one-letter code: Threonine--tRNA ligase (607 aa).

The tract at residues methionine 1–alanine 143 is editing domain. Catalytic regions lie at residues proline 193–proline 489 and arginine 194–proline 489. Zn(2+) is bound by residues cysteine 286, histidine 337, and histidine 458.

This sequence belongs to the class-II aminoacyl-tRNA synthetase family. In terms of assembly, homodimer. Zn(2+) serves as cofactor.

It localises to the cytoplasm. It carries out the reaction tRNA(Thr) + L-threonine + ATP = L-threonyl-tRNA(Thr) + AMP + diphosphate + H(+). Its function is as follows. Catalyzes the attachment of threonine to tRNA(Thr) in a two-step reaction: L-threonine is first activated by ATP to form Thr-AMP and then transferred to the acceptor end of tRNA(Thr). Also edits incorrectly charged L-seryl-tRNA(Thr). The protein is Threonine--tRNA ligase of Pyrobaculum calidifontis (strain DSM 21063 / JCM 11548 / VA1).